Consider the following 201-residue polypeptide: Small ribosomal subunit protein uS4 (201 aa).

In terms of domain architecture, S4 RNA-binding spans 91-154 (SRLDNVIYRA…QKMEWFEEAQ (64 aa)).

The protein belongs to the universal ribosomal protein uS4 family. As to quaternary structure, part of the 30S ribosomal subunit. Contacts protein S5. The interaction surface between S4 and S5 is involved in control of translational fidelity.

In terms of biological role, one of the primary rRNA binding proteins, it binds directly to 16S rRNA where it nucleates assembly of the body of the 30S subunit. Functionally, with S5 and S12 plays an important role in translational accuracy. The polypeptide is Small ribosomal subunit protein uS4 (Corynebacterium aurimucosum (strain ATCC 700975 / DSM 44827 / CIP 107346 / CN-1) (Corynebacterium nigricans)).